Here is a 53-residue protein sequence, read N- to C-terminus: Large ribosomal subunit protein bL32c (53 aa).

The protein belongs to the bacterial ribosomal protein bL32 family.

The protein localises to the plastid. The protein resides in the chloroplast. The chain is Large ribosomal subunit protein bL32c from Coffea arabica (Arabian coffee).